The following is a 253-amino-acid chain: Indole-3-glycerol phosphate synthase (253 aa).

Belongs to the TrpC family.

The enzyme catalyses 1-(2-carboxyphenylamino)-1-deoxy-D-ribulose 5-phosphate + H(+) = (1S,2R)-1-C-(indol-3-yl)glycerol 3-phosphate + CO2 + H2O. It functions in the pathway amino-acid biosynthesis; L-tryptophan biosynthesis; L-tryptophan from chorismate: step 4/5. The protein is Indole-3-glycerol phosphate synthase of Bacillus cereus (strain AH187).